The chain runs to 667 residues: Beta-galactosidase LacA (667 aa).

Arginine 109 lines the substrate pocket. Cysteine 113 is a Zn(2+) binding site. Asparagine 147 lines the substrate pocket. Glutamate 148 functions as the Proton donor in the catalytic mechanism. Zn(2+) is bound by residues cysteine 153, cysteine 155, and cysteine 158. The active-site Nucleophile is glutamate 307. Substrate is bound by residues tryptophan 315 and 355–358 (EKFH).

This sequence belongs to the glycosyl hydrolase 42 family.

It carries out the reaction Hydrolysis of terminal non-reducing beta-D-galactose residues in beta-D-galactosides.. Its function is as follows. Hydrolyzes lactose, oNP-galactoside (oNPG), pNP-galactosidase (pNPG), pNP-mannoside, pNP-glucoside, pNP-fucoside, pNP-N-acetylglucosamide, but not pNP-arabinoside or 4-methylumbelliferyl-beta-galactopyranoside (MUG). Transgalactosylates lactose at 10 g/L, but not at 270 g/L. This Lactobacillus acidophilus protein is Beta-galactosidase LacA.